Consider the following 307-residue polypeptide: Transaldolase (307 aa).

Lys125 acts as the Schiff-base intermediate with substrate in catalysis.

This sequence belongs to the transaldolase family. Type 1 subfamily.

The protein localises to the cytoplasm. It catalyses the reaction D-sedoheptulose 7-phosphate + D-glyceraldehyde 3-phosphate = D-erythrose 4-phosphate + beta-D-fructose 6-phosphate. Its pathway is carbohydrate degradation; pentose phosphate pathway; D-glyceraldehyde 3-phosphate and beta-D-fructose 6-phosphate from D-ribose 5-phosphate and D-xylulose 5-phosphate (non-oxidative stage): step 2/3. Functionally, transaldolase is important for the balance of metabolites in the pentose-phosphate pathway. In Pseudomonas aeruginosa (strain ATCC 15692 / DSM 22644 / CIP 104116 / JCM 14847 / LMG 12228 / 1C / PRS 101 / PAO1), this protein is Transaldolase.